Here is a 148-residue protein sequence, read N- to C-terminus: Cytochrome c-type biogenesis protein CcmE (148 aa).

Residues 1–7 (MTRKQRR) are Cytoplasmic-facing. A helical; Signal-anchor for type II membrane protein transmembrane segment spans residues 8–28 (LYFVLLGMAALGGAVALVLTA). The Periplasmic segment spans residues 29 to 148 (ISDSLVYFYS…QWNDGKQPKQ (120 aa)). Heme contacts are provided by His-121 and Tyr-125.

Belongs to the CcmE/CycJ family.

The protein localises to the cell inner membrane. Functionally, heme chaperone required for the biogenesis of c-type cytochromes. Transiently binds heme delivered by CcmC and transfers the heme to apo-cytochromes in a process facilitated by CcmF and CcmH. The protein is Cytochrome c-type biogenesis protein CcmE of Paramagnetospirillum magneticum (strain ATCC 700264 / AMB-1) (Magnetospirillum magneticum).